The chain runs to 2282 residues: Ectopic P granules protein 5 homolog (2282 aa).

This sequence belongs to the EPG5 family.

Involved in autophagy. In Aedes aegypti (Yellowfever mosquito), this protein is Ectopic P granules protein 5 homolog.